We begin with the raw amino-acid sequence, 212 residues long: Protein-L-isoaspartate O-methyltransferase (212 aa).

The active site involves Ser-56.

This sequence belongs to the methyltransferase superfamily. L-isoaspartyl/D-aspartyl protein methyltransferase family.

It localises to the cytoplasm. The catalysed reaction is [protein]-L-isoaspartate + S-adenosyl-L-methionine = [protein]-L-isoaspartate alpha-methyl ester + S-adenosyl-L-homocysteine. In terms of biological role, catalyzes the methyl esterification of L-isoaspartyl residues in peptides and proteins that result from spontaneous decomposition of normal L-aspartyl and L-asparaginyl residues. It plays a role in the repair and/or degradation of damaged proteins. This is Protein-L-isoaspartate O-methyltransferase from Myxococcus xanthus (strain DK1622).